A 96-amino-acid chain; its full sequence is uncharacterized protein (96 aa).

N-linked (GlcNAc...) asparagine glycosylation is present at Asn4. A helical transmembrane segment spans residues 59 to 81 (VFFTIFDTIITIIVRSGIPFPLL).

It is found in the membrane. This is an uncharacterized protein from Saccharomyces cerevisiae (strain ATCC 204508 / S288c) (Baker's yeast).